Reading from the N-terminus, the 422-residue chain is Dihydroorotase (422 aa).

Zn(2+)-binding residues include His-53 and His-55. Substrate-binding positions include 55–57 and Asn-87; that span reads HFR. Residues Glu-138, His-172, His-223, and Asp-291 each contribute to the Zn(2+) site. The active site involves Asp-291. His-295 is a substrate binding site.

It belongs to the metallo-dependent hydrolases superfamily. DHOase family. Class I DHOase subfamily. It depends on Zn(2+) as a cofactor.

It catalyses the reaction (S)-dihydroorotate + H2O = N-carbamoyl-L-aspartate + H(+). It participates in pyrimidine metabolism; UMP biosynthesis via de novo pathway; (S)-dihydroorotate from bicarbonate: step 3/3. Functionally, catalyzes the reversible cyclization of carbamoyl aspartate to dihydroorotate. This chain is Dihydroorotase, found in Halobacterium salinarum (strain ATCC 700922 / JCM 11081 / NRC-1) (Halobacterium halobium).